A 295-amino-acid polypeptide reads, in one-letter code: Putative attaching and effacing protein homolog (295 aa).

The signal sequence occupies residues 1–25 (MSHYKTGHKQPRFRYSVLARCVAWA).

It belongs to the intimin/invasin family.

In Escherichia coli (strain K12), this protein is Putative attaching and effacing protein homolog (eaeH).